The following is a 385-amino-acid chain: Bifunctional chorismate mutase/prephenate dehydratase (385 aa).

Residues 1–92 enclose the Chorismate mutase domain; the sequence is MPSKNDLLSF…ESVLTQKKLL (92 aa). Substrate is bound by residues R11, R28, K39, D48, E52, S84, and Q88. Residues 105 to 285 enclose the Prephenate dehydratase domain; sequence SFSFLGPKGS…NITRFILLSR (181 aa). The interval 286–385 is regulatory; sequence KPVSISSKIP…PSENITPIIP (100 aa). The 78-residue stretch at 299–376 folds into the ACT domain; it reads TLIFNTGQES…KFIKILGCYP (78 aa).

The protein resides in the cytoplasm. The enzyme catalyses chorismate = prephenate. It catalyses the reaction prephenate + H(+) = 3-phenylpyruvate + CO2 + H2O. It participates in amino-acid biosynthesis; L-phenylalanine biosynthesis; phenylpyruvate from prephenate: step 1/1. It functions in the pathway metabolic intermediate biosynthesis; prephenate biosynthesis; prephenate from chorismate: step 1/1. In terms of biological role, catalyzes the Claisen rearrangement of chorismate to prephenate and the decarboxylation/dehydration of prephenate to phenylpyruvate. The polypeptide is Bifunctional chorismate mutase/prephenate dehydratase (pheA) (Buchnera aphidicola subsp. Schizaphis graminum (strain Sg)).